A 409-amino-acid polypeptide reads, in one-letter code: Peptidase T (409 aa).

Zn(2+) is bound at residue His-78. Asp-80 is an active-site residue. Asp-140 is a binding site for Zn(2+). The active-site Proton acceptor is the Glu-173. 3 residues coordinate Zn(2+): Glu-174, Asp-196, and His-379.

The protein belongs to the peptidase M20B family. Requires Zn(2+) as cofactor.

Its subcellular location is the cytoplasm. The catalysed reaction is Release of the N-terminal residue from a tripeptide.. Its function is as follows. Cleaves the N-terminal amino acid of tripeptides. The polypeptide is Peptidase T (Salmonella agona (strain SL483)).